We begin with the raw amino-acid sequence, 249 residues long: Eukaryotic translation initiation factor 3 subunit K (249 aa).

In terms of domain architecture, PCI spans 46-222; sequence FDCYANLALL…VKVPTNKENE (177 aa).

Belongs to the eIF-3 subunit K family. As to quaternary structure, component of the eukaryotic translation initiation factor 3 (eIF-3) complex.

Its subcellular location is the cytoplasm. Its function is as follows. Component of the eukaryotic translation initiation factor 3 (eIF-3) complex, which is involved in protein synthesis of a specialized repertoire of mRNAs and, together with other initiation factors, stimulates binding of mRNA and methionyl-tRNAi to the 40S ribosome. The eIF-3 complex specifically targets and initiates translation of a subset of mRNAs involved in cell proliferation. The polypeptide is Eukaryotic translation initiation factor 3 subunit K (Aspergillus fumigatus (strain CBS 144.89 / FGSC A1163 / CEA10) (Neosartorya fumigata)).